The following is a 406-amino-acid chain: WD repeat and SOCS box-containing protein 2 (406 aa).

The interval 70-89 (AKSRSSKNETKGRGSPKEKT) is disordered. 5 WD repeats span residues 107 to 150 (PPSK…LLLN), 153 to 193 (GHQD…KQIQ), 197 to 236 (GHLQ…LIRK), 239 to 278 (GHQS…RLRS), and 293 to 332 (VHIS…PIAF). Positions 358 to 406 (HVQFWTAPRVLSSLKHLCRKALRSFLTTYQVLALPIPKKMKEFLTYRTF) constitute an SOCS box domain.

The protein operates within protein modification; protein ubiquitination. May be a substrate-recognition component of a SCF-like ECS (Elongin-Cullin-SOCS-box protein) E3 ubiquitin ligase complex which mediates the ubiquitination and subsequent proteasomal degradation of target proteins. The sequence is that of WD repeat and SOCS box-containing protein 2 (WSB2) from Bos taurus (Bovine).